A 373-amino-acid chain; its full sequence is 2-oxoglutarate oxidoreductase subunit KorB (373 aa).

The interval 26 to 50 (TPSLTKNAGVPTTDQPQKGKDFTSD) is disordered. Residues 27 to 41 (PSLTKNAGVPTTDQP) show a composition bias toward polar residues.

As to quaternary structure, KG oxidoreductase (KOR) is composed of KorA and KorB subunits. Mg(2+) serves as cofactor.

It catalyses the reaction 2 oxidized [2Fe-2S]-[ferredoxin] + 2-oxoglutarate + CoA = succinyl-CoA + 2 reduced [2Fe-2S]-[ferredoxin] + CO2 + H(+). Its pathway is carbohydrate metabolism; tricarboxylic acid cycle. Its function is as follows. Component of KG oxidoreductase (KOR) that catalyzes the CoA-dependent oxidative decarboxylation of 2-oxoglutarate (alpha-ketoglutarate, KG) to succinyl-CoA. Methyl viologen can act as electron acceptor in vitro; the physiologic electron acceptor is unknown. Is involved in the alternative TCA pathway that functions concurrently with fatty acid beta-oxidation. Since a growing body of evidence indicates that lipids (for example cholesterol and fatty acids) are a predominant growth substrate for M.tuberculosis during infection, flux through KOR likely represents an important step in intermediary metabolism in vivo. KOR-dependent decarboxylation of KG also appears to be an important source of CO(2) in M.tuberculosis metabolism. The polypeptide is 2-oxoglutarate oxidoreductase subunit KorB (korB) (Mycobacterium tuberculosis (strain ATCC 25618 / H37Rv)).